A 635-amino-acid polypeptide reads, in one-letter code: Biosynthetic arginine decarboxylase (635 aa).

At K100 the chain carries N6-(pyridoxal phosphate)lysine. L282–Y292 provides a ligand contact to substrate.

The protein belongs to the Orn/Lys/Arg decarboxylase class-II family. SpeA subfamily. Requires Mg(2+) as cofactor. Pyridoxal 5'-phosphate is required as a cofactor.

It catalyses the reaction L-arginine + H(+) = agmatine + CO2. It participates in amine and polyamine biosynthesis; agmatine biosynthesis; agmatine from L-arginine: step 1/1. In terms of biological role, catalyzes the biosynthesis of agmatine from arginine. The protein is Biosynthetic arginine decarboxylase of Trichlorobacter lovleyi (strain ATCC BAA-1151 / DSM 17278 / SZ) (Geobacter lovleyi).